Reading from the N-terminus, the 3788-residue chain is Lysosomal-trafficking regulator (3788 aa).

Disordered stretches follow at residues 148–180 and 198–217; these read KSTH…TVVS and EGHL…VLSD. Position 164 is a phosphoserine (serine 164). Threonine 165 is modified (phosphothreonine). Serine 166 bears the Phosphoserine mark. Residues 662–700 form a WD 1 repeat; sequence GPTSGLPSPSYRFQGILPSSGSEDLLWKWDALEAYQSFV. Disordered stretches follow at residues 1169 to 1196, 1213 to 1240, and 1482 to 1519; these read LGPG…FSEE, GYEA…EAEG, and ESAA…TESI. Over residues 1213–1232 the composition is skewed to acidic residues; it reads GYEADSESNPEDVDTQDDGV. Residues serine 1503 and serine 1504 each carry the phosphoserine modification. One copy of the WD 2 repeat lies at 1576-1620; it reads SQENIFFPSKWQHLVLTYIQHPQGKKNVHGEISIWVSGQRKTDVI. Phosphoserine is present on residues serine 2099, serine 2118, serine 2203, serine 2207, and serine 2254. Residues 2177-2221 form a disordered region; sequence ANGVSRGSPRFPRARVDHKDVGTEPRSDDDSPGDESYPRRPDNLK. A compositionally biased stretch (basic and acidic residues) spans 2190 to 2205; it reads ARVDHKDVGTEPRSDD. Disordered stretches follow at residues 2556–2581 and 2659–2681; these read HDSE…SIAG and NTSQ…HHEQ. Basic residues predominate over residues 2566–2578; the sequence is SAHRHSVPPKRRS. The segment covering 2659–2671 has biased composition (polar residues); the sequence is NTSQSKTSVSQTE. One can recognise a BEACH-type PH domain in the interval 2996-3102; it reads AASESIRVNR…VRDDVYQSIL (107 aa). In terms of domain architecture, BEACH spans 3126 to 3409; that stretch reads QITNFEYLTH…QLFHTAHASR (284 aa). WD repeat units follow at residues 3550–3589, 3601–3640, 3643–3686, 3687–3731, and 3736–3775; these read SQQH…STPS, GHTE…YVQS, GHKS…VGHV, HCRE…PVRE, and KSNK…RVKL.

In terms of assembly, interacts with CPAP, LIP8 and ZNF521. As to expression, expressed in the heart, lung, liver, spleen, brain and in different immune cell types (purified B and T lymphocytes, bone marrow-derived macrophages and dendritic cells).

It localises to the cytoplasm. In terms of biological role, adapter protein that regulates and/or fission of intracellular vesicles such as lysosomes. Might regulate trafficking of effectors involved in exocytosis. In cytotoxic T-cells and natural killer (NK) cells, has role in the regulation of size, number and exocytosis of lytic granules. In macrophages and dendritic cells, regulates phagosome maturation by controlling the conversion of early phagosomal compartments into late phagosomes. In macrophages and dendritic cells, specifically involved in TLR3- and TLR4-induced production of pro-inflammatory cytokines by regulating the endosomal TLR3- TICAM1/TRIF and TLR4- TICAM1/TRIF signaling pathways. This is Lysosomal-trafficking regulator (Lyst) from Mus musculus (Mouse).